The sequence spans 107 residues: Putative double-stranded DNA mimic protein HS_0995 (107 aa).

Belongs to the putative dsDNA mimic protein family.

Its function is as follows. May act as a double-stranded DNA (dsDNA) mimic. Probably regulates the activity of a dsDNA-binding protein. This Histophilus somni (strain 129Pt) (Haemophilus somnus) protein is Putative double-stranded DNA mimic protein HS_0995.